A 404-amino-acid chain; its full sequence is 4-hydroxyphenylpyruvate dioxygenase (404 aa).

VOC domains lie at 28–163 (GYDH…FIQR) and 194–353 (YVDH…IFTK). Positions 197, 280, and 364 each coordinate Fe cation.

The protein belongs to the 4HPPD family. Requires Fe cation as cofactor.

It catalyses the reaction 3-(4-hydroxyphenyl)pyruvate + O2 = homogentisate + CO2. It functions in the pathway amino-acid degradation; L-phenylalanine degradation; acetoacetate and fumarate from L-phenylalanine: step 3/6. In terms of biological role, key enzyme in the degradation of tyrosine. This chain is 4-hydroxyphenylpyruvate dioxygenase (TFA), found in Tetrahymena thermophila.